The sequence spans 316 residues: B3 domain-containing protein Os04g0581400 (316 aa).

The tract at residues 1–100 is disordered; that stretch reads MEFATTSSRF…GSGGGGGGED (100 aa). The span at 13-36 shows a compositional bias: acidic residues; the sequence is EEEEEEEGEQEMEQEQDEEEEEAE. The span at 46–77 shows a compositional bias: low complexity; that stretch reads TSAAAAATASSSSPTSVSPSATASAAASTSAS. Positions 88–98 are enriched in gly residues; that stretch reads GASGSGGGGGG. Positions 110–215 form a DNA-binding region, TF-B3; that stretch reads FDKVVTPSDV…RLFIDWKRRA (106 aa). Residues 239-290 are disordered; sequence GGAGASSCRPRRPPRSTSITAFARASTSATSTPLCRRGSSSSSAPQGRGFIS. Residues 253 to 270 are compositionally biased toward low complexity; that stretch reads RSTSITAFARASTSATST.

It localises to the nucleus. The sequence is that of B3 domain-containing protein Os04g0581400 from Oryza sativa subsp. japonica (Rice).